Consider the following 673-residue polypeptide: MAIRGHKGLQQLLSMATSVNSFLGPMKSYKFIFDQITHESILTSSSFRLLENLDLTSAIGQLLNETIQAHHKSYKTGTTTLFFMVGAWSSAVQECLHLGIPVSLIVSVMLDGLNSCIGHVHSLQVSLVSQVTSDCTNIKTNGINHSNYSASGDQGNCSSELENNPLPRVSNMRTASEFPVAFHKKPLPLCTGTNLYKTQRRRLFHSRHLAEDLSFFQDVPERPQTTTLNNETLDGLAKGLAHGYQPVMNLVKNAVCLHCAEIKENSLDKSSFNISRLETCSLPGLSEEHTTVSFGYTTLVPTESAAVITHLNGKPLRILLVDGELTESHRHLGFDNPDNVKMVFEHAGNEKHNLEDSWISRAYEKIIQANINLILVRGDVCPFLLKQCIHRNILIVTQVKQNILQAFSECTGAEPVTYLTQINCCSVGNEAFVTLCTRANSIIEVSQKIVISITAKKLNLITATLSSRIPSTMQSIEDQFLTCAYRLHHALQEGNVFYGGGAIELLCIHHLQKLVQESSSSFYAYDNAQFHCLSSWMTESATFYRAAIIGCLAKGWYKYISVLLCNMGGFLSELDAVTFIENELQNISHHSSPIDYVRDQYSKKDLFNDEMGISISHHSLPVYDNVTPKLEAWRRALHLVLTVLQTDAEVITNSATQNQILMSETSNGEYLFL.

This sequence belongs to the TCP-1 chaperonin family. BBS12 subfamily. As to quaternary structure, component of the chaperonin-containing T-complex (TRiC), a heterooligomeric complex of about 850 to 900 kDa that forms two stacked rings, 12 to 16 nm in diameter.

Its subcellular location is the cell projection. The protein resides in the cilium. In terms of biological role, component of the chaperonin-containing T-complex (TRiC), a molecular chaperone complex that assists the folding of proteins upon ATP hydrolysis. The sequence is that of Chaperonin-containing T-complex member BBS12 (bbs12) from Xenopus laevis (African clawed frog).